The primary structure comprises 238 residues: Probable metal transport system ATP-binding protein TP_0035 (238 aa).

The region spanning 10–231 is the ABC transporter domain; sequence VLLQNVSFRY…LDMQKKDALA (222 aa). ATP is bound at residue 44-51; sequence GENGSGKS.

The protein belongs to the ABC transporter superfamily.

The protein resides in the cell inner membrane. Part of an ATP-driven transport system TP_0034/TP_0035/TP_0036 for a metal. Probably responsible for energy coupling to the transport system. In Treponema pallidum (strain Nichols), this protein is Probable metal transport system ATP-binding protein TP_0035.